The primary structure comprises 208 residues: Probable DNA-3-methyladenine glycosylase (208 aa).

It belongs to the DNA glycosylase MPG family.

Its subcellular location is the nucleus. It catalyses the reaction Hydrolysis of alkylated DNA, releasing 3-methyladenine, 3-methylguanine, 7-methylguanine and 7-methyladenine.. Functionally, hydrolysis of the deoxyribose N-glycosidic bond to excise 3-methyladenine, and 7-methylguanine from the damaged DNA polymer formed by alkylation lesions. The polypeptide is Probable DNA-3-methyladenine glycosylase (Encephalitozoon cuniculi (strain GB-M1) (Microsporidian parasite)).